Here is a 361-residue protein sequence, read N- to C-terminus: Dihydroorotate dehydrogenase (quinone) (361 aa).

FMN is bound by residues 69 to 73 (AGFDK) and Thr-93. Residue Lys-73 participates in substrate binding. Substrate is bound at residue 118-122 (NRLGF). FMN contacts are provided by Asn-147 and Asn-180. Substrate is bound at residue Asn-180. Residue Ser-183 is the Nucleophile of the active site. Asn-185 lines the substrate pocket. FMN is bound by residues Lys-221 and Thr-249. 250–251 (NT) contributes to the substrate binding site. FMN contacts are provided by residues Gly-271, Gly-300, and 321–322 (YT).

Belongs to the dihydroorotate dehydrogenase family. Type 2 subfamily. Monomer. It depends on FMN as a cofactor.

The protein resides in the cell membrane. It catalyses the reaction (S)-dihydroorotate + a quinone = orotate + a quinol. Its pathway is pyrimidine metabolism; UMP biosynthesis via de novo pathway; orotate from (S)-dihydroorotate (quinone route): step 1/1. Functionally, catalyzes the conversion of dihydroorotate to orotate with quinone as electron acceptor. The polypeptide is Dihydroorotate dehydrogenase (quinone) (Roseiflexus sp. (strain RS-1)).